A 206-amino-acid chain; its full sequence is Proteasome subunit beta 1 (206 aa).

A propeptide spans 1–5 (removed in mature form; by autocatalysis); sequence MLMKG. The active-site Nucleophile is Thr6.

Belongs to the peptidase T1B family. In terms of assembly, the 20S proteasome core is composed of 14 alpha and 14 beta subunits that assemble into four stacked heptameric rings, resulting in a barrel-shaped structure. The two inner rings, each composed of seven catalytic beta subunits, are sandwiched by two outer rings, each composed of seven alpha subunits. The catalytic chamber with the active sites is on the inside of the barrel. Has a gated structure, the ends of the cylinder being occluded by the N-termini of the alpha-subunits. Is capped at one or both ends by the proteasome regulatory ATPase, PAN.

The protein resides in the cytoplasm. It carries out the reaction Cleavage of peptide bonds with very broad specificity.. The formation of the proteasomal ATPase PAN-20S proteasome complex, via the docking of the C-termini of PAN into the intersubunit pockets in the alpha-rings, triggers opening of the gate for substrate entry. Interconversion between the open-gate and close-gate conformations leads to a dynamic regulation of the 20S proteasome proteolysis activity. Its function is as follows. Component of the proteasome core, a large protease complex with broad specificity involved in protein degradation. This chain is Proteasome subunit beta 1, found in Korarchaeum cryptofilum (strain OPF8).